Here is a 298-residue protein sequence, read N- to C-terminus: Probable endonuclease LCL3 (298 aa).

Positions 1 to 24 are disordered; it reads MRWPWSGHDEEKKRNAATRSKRAE. Residues 39-56 form a helical membrane-spanning segment; the sequence is LVPSVALTVSTVLGLRLY. The 186-residue stretch at 77 to 262 folds into the TNase-like domain; sequence RTLFGQVTSV…KESRAGMWAK (186 aa). Arg-153 is an active-site residue. Asp-158 provides a ligand contact to Ca(2+). Residues Glu-161 and Arg-201 contribute to the active site. The disordered stretch occupies residues 269–298; that stretch reads LGGAGTKAPESPREYKSRHTAAEKQKKAAW. A compositionally biased stretch (basic and acidic residues) spans 278–298; it reads ESPREYKSRHTAAEKQKKAAW.

Belongs to the LCL3 family.

It is found in the mitochondrion. Its subcellular location is the membrane. This is Probable endonuclease LCL3 (LCL3) from Leptosphaeria maculans (strain JN3 / isolate v23.1.3 / race Av1-4-5-6-7-8) (Blackleg fungus).